The sequence spans 444 residues: N-succinylarginine dihydrolase (444 aa).

Substrate contacts are provided by residues 19 to 28, N110, and 137 to 138; these read SGLSVGNIAS and HR. Residue E174 is part of the active site. R214 provides a ligand contact to substrate. H250 is a catalytic residue. Substrate-binding residues include D252 and N362. Catalysis depends on C368, which acts as the Nucleophile.

This sequence belongs to the succinylarginine dihydrolase family. Homodimer.

The enzyme catalyses N(2)-succinyl-L-arginine + 2 H2O + 2 H(+) = N(2)-succinyl-L-ornithine + 2 NH4(+) + CO2. It participates in amino-acid degradation; L-arginine degradation via AST pathway; L-glutamate and succinate from L-arginine: step 2/5. In terms of biological role, catalyzes the hydrolysis of N(2)-succinylarginine into N(2)-succinylornithine, ammonia and CO(2). This Aliivibrio fischeri (strain ATCC 700601 / ES114) (Vibrio fischeri) protein is N-succinylarginine dihydrolase.